The following is a 908-amino-acid chain: Translation initiation factor IF-2 (908 aa).

The segment at 145-312 is disordered; that stretch reads EIPGLTQRAK…KGKKRQAEKI (168 aa). Residues 167-177 are compositionally biased toward basic and acidic residues; the sequence is VVERPEARPSA. Low complexity-rich tracts occupy residues 194–217 and 263–276; these read RPEGGYRPAGPRPAGQRPEGPRPG and VAGAGKKGPAGAAV. Over residues 278–296 the composition is skewed to basic and acidic residues; sequence KRKEEFKKTELFEKHERVF. The tr-type G domain occupies 408–577; it reads KRPPVVTIMG…LLQADVLELK (170 aa). The segment at 417 to 424 is G1; it reads GHVDHGKT. 417 to 424 serves as a coordination point for GTP; it reads GHVDHGKT. The interval 442–446 is G2; that stretch reads GITQH. The G3 stretch occupies residues 463–466; that stretch reads DTPG. Residues 463–467 and 517–520 each bind GTP; these read DTPGH and NKID. Residues 517–520 are G4; the sequence is NKID. The tract at residues 553–555 is G5; the sequence is SAK.

Belongs to the TRAFAC class translation factor GTPase superfamily. Classic translation factor GTPase family. IF-2 subfamily.

The protein localises to the cytoplasm. Functionally, one of the essential components for the initiation of protein synthesis. Protects formylmethionyl-tRNA from spontaneous hydrolysis and promotes its binding to the 30S ribosomal subunits. Also involved in the hydrolysis of GTP during the formation of the 70S ribosomal complex. The sequence is that of Translation initiation factor IF-2 from Geotalea daltonii (strain DSM 22248 / JCM 15807 / FRC-32) (Geobacter daltonii).